The primary structure comprises 319 residues: Thioredoxin reductase 1 (319 aa).

FAD-binding positions include 11–14 (SGPA), 40–41 (IA), Gln-45, Asn-54, Val-87, Cys-145, Asp-288, and 295–297 (RQA). A disulfide bridge links Cys-142 with Cys-145. The residue at position 303 (Ser-303) is a Phosphoserine.

The protein belongs to the class-II pyridine nucleotide-disulfide oxidoreductase family. As to quaternary structure, homodimer. It depends on FAD as a cofactor.

It localises to the cytoplasm. The protein localises to the mitochondrion intermembrane space. It catalyses the reaction [thioredoxin]-dithiol + NADP(+) = [thioredoxin]-disulfide + NADPH + H(+). In terms of biological role, central component in the thioredoxin system. Reduces thioredoxins 1 and 2. This Saccharomyces cerevisiae (strain ATCC 204508 / S288c) (Baker's yeast) protein is Thioredoxin reductase 1 (TRR1).